A 269-amino-acid chain; its full sequence is Glutamate racemase (269 aa).

Residues 7–8 (DS) and 39–40 (YG) each bind substrate. The active-site Proton donor/acceptor is cysteine 70. 71 to 72 (NT) is a substrate binding site. Cysteine 194 acts as the Proton donor/acceptor in catalysis. Residue 195–196 (TH) coordinates substrate.

The protein belongs to the aspartate/glutamate racemases family.

It catalyses the reaction L-glutamate = D-glutamate. It functions in the pathway cell wall biogenesis; peptidoglycan biosynthesis. In terms of biological role, provides the (R)-glutamate required for cell wall biosynthesis. This is Glutamate racemase from Roseobacter denitrificans (strain ATCC 33942 / OCh 114) (Erythrobacter sp. (strain OCh 114)).